The following is a 191-amino-acid chain: MASKYRGYYHDEASSAAGGGGGGGGGDGYRREKQVRKKRLTAQKRKEIKEAFDLFDTDGSGTIDPKELNVAMRALGFEMTPEQIHQMIAEVDKDGSGTIDFDEFVHMMTDKMGERDAREELNKAFKIIDKDNNGKISDVDIQRLAIETGEPFTLDEVREMIEAADENGDGEVDHEEFLKMMKRIGFGAGFF.

Positions 1 to 41 (MASKYRGYYHDEASSAAGGGGGGGGGDGYRREKQVRKKRLT) are disordered. A compositionally biased stretch (gly residues) spans 17–27 (AGGGGGGGGGD). EF-hand domains follow at residues 43–78 (QKRKEIKEAFDLFDTDGSGTIDPKELNVAMRALGFE), 79–114 (MTPEQIHQMIAEVDKDGSGTIDFDEFVHMMTDKMGE), 116–151 (DAREELNKAFKIIDKDNNGKISDVDIQRLAIETGEP), and 152–187 (FTLDEVREMIEAADENGDGEVDHEEFLKMMKRIGFG). 20 residues coordinate Ca(2+): D56, D58, S60, T62, E67, D92, D94, S96, T98, E103, D129, D131, N133, K135, D140, D165, N167, D169, E171, and E176.

Potential calcium sensor. The protein is Probable calcium-binding protein CML8 (CML8) of Oryza sativa subsp. japonica (Rice).